We begin with the raw amino-acid sequence, 423 residues long: WD repeat and SOCS box-containing protein 1 (423 aa).

The disordered stretch occupies residues 76–100 (DRSSGAGPRRLSRQNSEGSLLPGEP). WD repeat units follow at residues 125-166 (SRCV…LLLN), 169-209 (DHTD…NMVK), 213-252 (GHQN…LIRK), 255-294 (GHHN…VLLE), and 310-347 (ANDR…KSPQ). Residues 373 to 423 (DGSVHFWASPRSIASLQHLCRMTLRRVMPTQQVYTLPIPFSMQDYLAYKTL) enclose the SOCS box domain.

Component of a probable ECS E3 ubiquitin-protein ligase complex that contains the Elongin BC complex.

The protein operates within protein modification; protein ubiquitination. Probable substrate-recognition component of a SCF-like ECS (Elongin-Cullin-SOCS-box protein) E3 ubiquitin-protein ligase complex which mediates the ubiquitination and subsequent proteasomal degradation of target proteins. The chain is WD repeat and SOCS box-containing protein 1 (wsb1) from Danio rerio (Zebrafish).